The primary structure comprises 224 residues: dTTP/UTP pyrophosphatase (224 aa).

The Proton acceptor role is filled by Asp77.

Belongs to the Maf family. YhdE subfamily. It depends on a divalent metal cation as a cofactor.

It is found in the cytoplasm. The enzyme catalyses dTTP + H2O = dTMP + diphosphate + H(+). The catalysed reaction is UTP + H2O = UMP + diphosphate + H(+). In terms of biological role, nucleoside triphosphate pyrophosphatase that hydrolyzes dTTP and UTP. May have a dual role in cell division arrest and in preventing the incorporation of modified nucleotides into cellular nucleic acids. The sequence is that of dTTP/UTP pyrophosphatase from Dehalococcoides mccartyi (strain ATCC BAA-2100 / JCM 16839 / KCTC 5957 / BAV1).